The following is a 199-amino-acid chain: CASP-like protein 1B2 (199 aa).

Over 1 to 22 the chain is Cytoplasmic; sequence MALQSEEKLEVGYSSLQPKTRK. Residues 23–43 traverse the membrane as a helical segment; sequence WVLLMLRVLAFFATAAATVVM. Residues 44–74 lie on the Extracellular side of the membrane; it reads GLNKETKTLVVATVGSTPIKASLAAKFQHTP. The chain crosses the membrane as a helical span at residues 75 to 95; sequence AFVFFVIANGLASIHNLVMIM. Residues 96–112 lie on the Cytoplasmic side of the membrane; that stretch reads GDLFGQKLDYKGLRLAM. Residues 113–133 traverse the membrane as a helical segment; that stretch reads IAILDMMTVALVSGGVSAAAF. The Extracellular portion of the chain corresponds to 134-163; the sequence is MAELGKNGNSHARWNKICDKFETFCDHGGG. The helical transmembrane segment at 164–184 threads the bilayer; that stretch reads ALIASFAGLILMLIISVMSII. The Cytoplasmic portion of the chain corresponds to 185-199; sequence KLLIKPKPDSTIVVP.

The protein belongs to the Casparian strip membrane proteins (CASP) family. As to quaternary structure, homodimer and heterodimers.

The protein localises to the cell membrane. In Populus trichocarpa (Western balsam poplar), this protein is CASP-like protein 1B2.